The following is an 80-amino-acid chain: Late expression factor 10 (80 aa).

This sequence belongs to the baculoviridae LEF-10 family.

Involved in late/very late gene activation. This chain is Late expression factor 10 (LEF-10), found in Orgyia pseudotsugata multicapsid polyhedrosis virus (OpMNPV).